The primary structure comprises 257 residues: MKVIDLNCDMGESFGHYKIGCDEEVINYISSANIACGFHAGDPQVMDYTVKLARDNKVGVGAHPGFNDLQGFGRRKIHMTGEEIVNELIYQIGAIRSFCEANGVGLSHVKPHGALNNMASVDENLARAVAKAIKLTDPNLIYIALAGSKMEQIGREEGLKVAKEAFADRQYNPDGTLVSRQEAGAVLHDKETIIERVVQMASEGVVTAKDGTKLNINPDTICVHGDNPEAVELAASIRHMLQEHGITVKSLGTWFTG.

Belongs to the LamB/PxpA family. As to quaternary structure, forms a complex composed of PxpA, PxpB and PxpC.

The enzyme catalyses 5-oxo-L-proline + ATP + 2 H2O = L-glutamate + ADP + phosphate + H(+). In terms of biological role, catalyzes the cleavage of 5-oxoproline to form L-glutamate coupled to the hydrolysis of ATP to ADP and inorganic phosphate. The protein is 5-oxoprolinase subunit A of Natranaerobius thermophilus (strain ATCC BAA-1301 / DSM 18059 / JW/NM-WN-LF).